We begin with the raw amino-acid sequence, 247 residues long: MAGHSKWANIQHRKGRQDAKRGKMFTKAAKEIIIAAKAGGDPVGNSRLRAAIAAAKAINLPKDKIENAIKKGTGELAGGDILEMAYEGYGPGGVALIVEVATDNKNRTVAEVRHILSKHGGSMGESGCVAWMFDRKGVITLEKDKYTEEQLMEVALEAGAEDVTDEGESWEVVTAAADFNAVREALEAAGVEMQSAEFTMVPQNEIEVDVETGRKLMRLVDALEDNDDVQNVHANFDLPDELLAELG.

The segment at 1-22 (MAGHSKWANIQHRKGRQDAKRG) is disordered.

The protein belongs to the TACO1 family.

It localises to the cytoplasm. The polypeptide is Probable transcriptional regulatory protein Dvul_0986 (Nitratidesulfovibrio vulgaris (strain DP4) (Desulfovibrio vulgaris)).